A 381-amino-acid chain; its full sequence is Protein-glutamate methylesterase/protein-glutamine glutaminase (381 aa).

The Response regulatory domain maps to 20 to 138 (RVMVVDDSVV…EIAAADIFKH (119 aa)). At D71 the chain carries 4-aspartylphosphate. Residues 154 to 176 (PAALASAREPEPRPIQATPVPAH) form a disordered region. Residues 183–373 (PFSTHAPRAL…PLQQIAPKLV (191 aa)) form the CheB-type methylesterase domain. Active-site residues include S197, H225, and D321.

It belongs to the CheB family. Post-translationally, phosphorylated by CheA. Phosphorylation of the N-terminal regulatory domain activates the methylesterase activity.

The protein resides in the cytoplasm. It catalyses the reaction [protein]-L-glutamate 5-O-methyl ester + H2O = L-glutamyl-[protein] + methanol + H(+). It carries out the reaction L-glutaminyl-[protein] + H2O = L-glutamyl-[protein] + NH4(+). Functionally, involved in chemotaxis. Part of a chemotaxis signal transduction system that modulates chemotaxis in response to various stimuli. Catalyzes the demethylation of specific methylglutamate residues introduced into the chemoreceptors (methyl-accepting chemotaxis proteins or MCP) by CheR. Also mediates the irreversible deamidation of specific glutamine residues to glutamic acid. This chain is Protein-glutamate methylesterase/protein-glutamine glutaminase, found in Nitrobacter hamburgensis (strain DSM 10229 / NCIMB 13809 / X14).